Consider the following 243-residue polypeptide: 1-(5-phosphoribosyl)-5-[(5-phosphoribosylamino)methylideneamino] imidazole-4-carboxamide isomerase (243 aa).

Asp-8 (proton acceptor) is an active-site residue. Catalysis depends on Asp-129, which acts as the Proton donor.

Belongs to the HisA/HisF family.

It is found in the cytoplasm. It catalyses the reaction 1-(5-phospho-beta-D-ribosyl)-5-[(5-phospho-beta-D-ribosylamino)methylideneamino]imidazole-4-carboxamide = 5-[(5-phospho-1-deoxy-D-ribulos-1-ylimino)methylamino]-1-(5-phospho-beta-D-ribosyl)imidazole-4-carboxamide. It participates in amino-acid biosynthesis; L-histidine biosynthesis; L-histidine from 5-phospho-alpha-D-ribose 1-diphosphate: step 4/9. In Parvibaculum lavamentivorans (strain DS-1 / DSM 13023 / NCIMB 13966), this protein is 1-(5-phosphoribosyl)-5-[(5-phosphoribosylamino)methylideneamino] imidazole-4-carboxamide isomerase.